The sequence spans 592 residues: Guanylate-binding protein 1 (592 aa).

Residues 1–311 (MASEIHMTGP…NAISSGDLPC (311 aa)) are GTPase domain (Globular). The region spanning 35–278 (TQPMVVVAIV…FCSYIFSNSK (244 aa)) is the GB1/RHD3-type G domain. GTP-binding positions include 45-52 (GLYRTGKS), 67-69 (LGS), and 97-101 (DTEGL). Ser-156 bears the Phosphoserine mark. Cys-589 is subject to Cysteine methyl ester. Cys-589 is lipidated: S-farnesyl cysteine. Thr-590 is modified (phosphothreonine). Residues 590-592 (TIS) constitute a propeptide, removed in mature form.

Belongs to the TRAFAC class dynamin-like GTPase superfamily. GB1/RHD3 GTPase family. GB1 subfamily. Homodimer; homodimerization occurs upon GTP-binding and is required for the second hydrolysis step from GDP to GMP. Undergoes conformational changes and oligomerization upon GTP-binding and hydrolysis. Heterodimer with other family members, including GBP2, GBP3, GBP4 and GBP5. Dimerization regulates subcellular location to membranous structures. Interacts with SQSTM1. Interacts (when phosphorylated) with 14-3-3 protein sigma (SFN); leading to GBP1 retention in the cytosol and inactivation. Isoprenylation is required for proper subcellular location. In terms of processing, phosphorylated at Ser-156 by PIM1 in absence of infection, inhibits GBP1: phosphorylation promotes interaction with 14-3-3 protein sigma (SFN), leading to GBP1 retention in the cytosol. Dephosphorylated in response to infection, liberating GBP1.

It localises to the cytoplasmic vesicle membrane. It is found in the golgi apparatus membrane. The protein localises to the cell membrane. Its subcellular location is the cytoplasm. The protein resides in the cytosol. It localises to the secreted. The catalysed reaction is GTP + H2O = GDP + phosphate + H(+). The enzyme catalyses GDP + H2O = GMP + phosphate + H(+). Its function is as follows. Interferon (IFN)-inducible GTPase that plays important roles in innate immunity against a diverse range of bacterial, viral and protozoan pathogens. Hydrolyzes GTP to GMP in two consecutive cleavage reactions: GTP is first hydrolyzed to GDP and then to GMP in a processive manner. Following infection, recruited to the pathogen-containing vacuoles or vacuole-escaped bacteria and promotes both inflammasome assembly and autophagy. Acts as a positive regulator of inflammasome assembly by facilitating the detection of inflammasome ligands from pathogens. Involved in the lysis of pathogen-containing vacuoles, releasing pathogens into the cytosol. Following pathogen release in the cytosol, forms a protein coat in a GTPase-dependent manner that encapsulates pathogens and promotes the detection of ligands by pattern recognition receptors. Plays a key role in inflammasome assembly in response to infection by Gram-negative bacteria: following pathogen release in the cytosol, forms a protein coat that encapsulates Gram-negative bacteria and directly binds to lipopolysaccharide (LPS), disrupting the O-antigen barrier and unmasking lipid A that is that detected by the non-canonical inflammasome effector CASP4/CASP11. Also promotes recruitment of proteins that mediate bacterial cytolysis, leading to release double-stranded DNA (dsDNA) that activates the AIM2 inflammasome. Involved in autophagy by regulating bacteriolytic peptide generation via its interaction with ubiquitin-binding protein SQSTM1, which delivers monoubiquitinated proteins to autolysosomes for the generation of bacteriolytic peptides. Confers protection to several pathogens, including the bacterial pathogens L.monocytogenes and M.bovis BCG as well as the protozoan pathogen T.gondii. Exhibits antiviral activity against influenza virus. The protein is Guanylate-binding protein 1 (GBP1) of Pongo abelii (Sumatran orangutan).